The sequence spans 211 residues: Large ribosomal subunit protein bL25 (211 aa).

The disordered stretch occupies residues 188–211 (APKAAKVSTDDEAAAPAEEAPAAE). A compositionally biased stretch (low complexity) spans 201 to 211 (AAPAEEAPAAE).

This sequence belongs to the bacterial ribosomal protein bL25 family. CTC subfamily. As to quaternary structure, part of the 50S ribosomal subunit; part of the 5S rRNA/L5/L18/L25 subcomplex. Contacts the 5S rRNA. Binds to the 5S rRNA independently of L5 and L18.

This is one of the proteins that binds to the 5S RNA in the ribosome where it forms part of the central protuberance. The sequence is that of Large ribosomal subunit protein bL25 from Colwellia psychrerythraea (strain 34H / ATCC BAA-681) (Vibrio psychroerythus).